Reading from the N-terminus, the 449-residue chain is UDP-N-acetylmuramate--L-alanine ligase (449 aa).

Position 121 to 127 (121 to 127 (GAHGKSS)) interacts with ATP.

The protein belongs to the MurCDEF family.

Its subcellular location is the cytoplasm. The catalysed reaction is UDP-N-acetyl-alpha-D-muramate + L-alanine + ATP = UDP-N-acetyl-alpha-D-muramoyl-L-alanine + ADP + phosphate + H(+). It participates in cell wall biogenesis; peptidoglycan biosynthesis. Cell wall formation. In Helicobacter pylori (strain ATCC 700392 / 26695) (Campylobacter pylori), this protein is UDP-N-acetylmuramate--L-alanine ligase.